A 310-amino-acid chain; its full sequence is Lipoyl synthase (310 aa).

Residues Cys61, Cys66, Cys72, Cys87, Cys91, Cys94, and Ser300 each coordinate [4Fe-4S] cluster. The Radical SAM core domain maps to 73–289; it reads FNNGTATFMI…EYIALSLGFS (217 aa).

It belongs to the radical SAM superfamily. Lipoyl synthase family. The cofactor is [4Fe-4S] cluster.

The protein resides in the cytoplasm. It carries out the reaction [[Fe-S] cluster scaffold protein carrying a second [4Fe-4S](2+) cluster] + N(6)-octanoyl-L-lysyl-[protein] + 2 oxidized [2Fe-2S]-[ferredoxin] + 2 S-adenosyl-L-methionine + 4 H(+) = [[Fe-S] cluster scaffold protein] + N(6)-[(R)-dihydrolipoyl]-L-lysyl-[protein] + 4 Fe(3+) + 2 hydrogen sulfide + 2 5'-deoxyadenosine + 2 L-methionine + 2 reduced [2Fe-2S]-[ferredoxin]. It participates in protein modification; protein lipoylation via endogenous pathway; protein N(6)-(lipoyl)lysine from octanoyl-[acyl-carrier-protein]: step 2/2. In terms of biological role, catalyzes the radical-mediated insertion of two sulfur atoms into the C-6 and C-8 positions of the octanoyl moiety bound to the lipoyl domains of lipoate-dependent enzymes, thereby converting the octanoylated domains into lipoylated derivatives. The protein is Lipoyl synthase of Buchnera aphidicola subsp. Cinara cedri (strain Cc).